Here is a 509-residue protein sequence, read N- to C-terminus: MYHFGATLWPGVGSLCLLLAGATWAPSPNSPDAKFESKAALLAARGPEELLCFTERLEDLVCFWEEAGSAGVGPEDYSFSYQLEGEPWKPCHLHQGPTARGSVRFWCSLPTADTSSFVPLELRVTEVSSGAPRYHRIIHINEVVLLDPPAGLLARRAEESGHVVLRWLPPPGAPMASLIRYEVNISTENAAGGVQRVEILDGRTECVLSNLRGGTRYTFMVRARMAEPSFGGFWSAWSEPASLLTASDLDPLILTLSLILVLILLLLAVLALLSHRRTLKQKIWPGIPSPEGEFEGLFTTHKGNFQLWLYQTDGCLWWSPCTPFAEDPPAPLEVLSERCWGVTQAVEPAADDEGSLLEPVGSEHARDTYLVLDKWLLPRRPASEDLPQPGGDLDMAAMDEASEASFCSSALALKPGPEGASAASFEYTILDPSSQLLRPRALPAELPPTPPHLKYLYLVVSDSGISTDYSSGGSQETQGGSSSGPYSNPYENSLVPAPEPSPPNYVTCS.

Residues 1–24 (MYHFGATLWPGVGSLCLLLAGATW) form the signal peptide. Topologically, residues 25–251 (APSPNSPDAK…SLLTASDLDP (227 aa)) are extracellular. 2 cysteine pairs are disulfide-bonded: Cys-52/Cys-62 and Cys-91/Cys-107. The 101-residue stretch at 148–248 (PPAGLLARRA…EPASLLTASD (101 aa)) folds into the Fibronectin type-III domain. N-linked (GlcNAc...) asparagine glycosylation occurs at Asn-184. The WSXWS motif motif lies at 234–238 (WSAWS). Residues 252-274 (LILTLSLILVLILLLLAVLALLS) form a helical membrane-spanning segment. At 275–509 (HRRTLKQKIW…PSPPNYVTCS (235 aa)) the chain is on the cytoplasmic side. Residue Lys-282 forms a Glycyl lysine isopeptide (Lys-Gly) (interchain with G-Cter in ubiquitin) linkage. The Box 1 motif motif lies at 283–291 (IWPGIPSPE). A phosphotyrosine; by JAK2 mark is found at Tyr-369 and Tyr-427. Residues 453–458 (LKYLYL) carry the ITIM motif motif. Residue Lys-454 forms a Glycyl lysine isopeptide (Lys-Gly) (interchain with G-Cter in ubiquitin) linkage. A phosphotyrosine; by JAK2 mark is found at Tyr-455, Tyr-457, Tyr-469, Tyr-486, Tyr-490, and Tyr-505. The interval 467–509 (TDYSSGGSQETQGGSSSGPYSNPYENSLVPAPEPSPPNYVTCS) is disordered. Low complexity predominate over residues 470-493 (SSGGSQETQGGSSSGPYSNPYENS).

Belongs to the type I cytokine receptor family. Type 1 subfamily. In terms of assembly, forms homodimers on EPO stimulation. The tyrosine-phosphorylated form interacts with several SH2 domain-containing proteins including LYN, the adapter protein SH2B2, PTPN6, PTPN11, JAK2, PI3 kinases, STAT5A/B, SOCS3, CRKL. Interacts with INPP5D/SHIP1. SH2B2 binding inhibits the JAK-STAT signaling. Interacts with RHEX; this interaction occurs in a erythropoietin (EPO)-dependent manner. Interacts with ATXN2L. In terms of processing, on EPO stimulation, phosphorylated on C-terminal tyrosine residues by JAK2. The phosphotyrosine motifs are also recruitment sites for several SH2-containing proteins and adapter proteins which mediate cell proliferation. Phosphorylation on Tyr-455 is required for PTPN6 interaction, Tyr-427 for PTPN11. Tyr-427 is also required for SOCS3 binding, but Tyr-455/Tyr-457 motif is the preferred binding site. Post-translationally, ubiquitinated by the ECS(SOCS2) complex following ligand-binding and phosphorylation by JAK2, leading to its degradation by the proteasome. Regulation by the ECS(SOCS2) complex acts as a negative feedback loop of erythropoietin-mediated signaling pathway. Ubiquitination at Lys-282 mediates receptor internalization, whereas ubiquitination at Lys-454 promotes trafficking of activated receptors to the lysosomes for degradation. Ubiquitinated by NOSIP; appears to be either multi-monoubiquitinated or polyubiquitinated. Ubiquitination mediates proliferation and survival of EPO-dependent cells.

Its subcellular location is the cell membrane. Its function is as follows. Receptor for erythropoietin, which mediates erythropoietin-induced erythroblast proliferation and differentiation. Upon EPO stimulation, EPOR dimerizes triggering the JAK2/STAT5 signaling cascade. In some cell types, can also activate STAT1 and STAT3. May also activate the LYN tyrosine kinase. Functionally, isoform EPOR-T acts as a dominant-negative receptor of EPOR-mediated signaling. The chain is Erythropoietin receptor (EPOR) from Sus scrofa (Pig).